The primary structure comprises 341 residues: Ribosomal RNA small subunit methyltransferase H (341 aa).

S-adenosyl-L-methionine is bound by residues 47–49 (GGY), D64, F91, D109, and Q116.

Belongs to the methyltransferase superfamily. RsmH family.

It localises to the cytoplasm. It carries out the reaction cytidine(1402) in 16S rRNA + S-adenosyl-L-methionine = N(4)-methylcytidine(1402) in 16S rRNA + S-adenosyl-L-homocysteine + H(+). Its function is as follows. Specifically methylates the N4 position of cytidine in position 1402 (C1402) of 16S rRNA. The polypeptide is Ribosomal RNA small subunit methyltransferase H (Sinorhizobium medicae (strain WSM419) (Ensifer medicae)).